Here is a 248-residue protein sequence, read N- to C-terminus: 3-deoxy-manno-octulosonate cytidylyltransferase (248 aa).

Belongs to the KdsB family.

It is found in the cytoplasm. It carries out the reaction 3-deoxy-alpha-D-manno-oct-2-ulosonate + CTP = CMP-3-deoxy-beta-D-manno-octulosonate + diphosphate. It participates in nucleotide-sugar biosynthesis; CMP-3-deoxy-D-manno-octulosonate biosynthesis; CMP-3-deoxy-D-manno-octulosonate from 3-deoxy-D-manno-octulosonate and CTP: step 1/1. Its pathway is bacterial outer membrane biogenesis; lipopolysaccharide biosynthesis. Its function is as follows. Activates KDO (a required 8-carbon sugar) for incorporation into bacterial lipopolysaccharide in Gram-negative bacteria. This Escherichia coli O6:H1 (strain CFT073 / ATCC 700928 / UPEC) protein is 3-deoxy-manno-octulosonate cytidylyltransferase.